We begin with the raw amino-acid sequence, 692 residues long: Acyl-coenzyme A oxidase 2, peroxisomal (692 aa).

The transit peptide at methionine 1–cysteine 49 directs the protein to the peroxisome. FAD is bound by residues threonine 186, serine 192, glycine 225, arginine 365, glutamine 384, glycine 452, and threonine 473. Glutamate 475 serves as the catalytic Proton acceptor. Aspartate 477 lines the FAD pocket.

This sequence belongs to the acyl-CoA oxidase family. As to quaternary structure, homodimer. FAD serves as cofactor. As to expression, expressed mainly in flowers and young seedlings. Lower expression in roots, leaves and bracts.

It localises to the peroxisome. It catalyses the reaction a 2,3-saturated acyl-CoA + O2 = a (2E)-enoyl-CoA + H2O2. Its function is as follows. Catalyzes the desaturation of long-chain acyl-CoAs to 2-trans-enoyl-CoAs. Active on substrates longer than C14 and mostly with C18-CoA. Activity on long-chain mono-unsaturated substrates is double than with the corresponding saturated substrates. This chain is Acyl-coenzyme A oxidase 2, peroxisomal, found in Arabidopsis thaliana (Mouse-ear cress).